The following is a 142-amino-acid chain: Hemoglobin subunit alpha-I/II (142 aa).

One can recognise a Globin domain in the interval 2–142; it reads VLSAADKGNV…VSTVLTSKYR (141 aa). Ser4 is subject to Phosphoserine. N6-succinyllysine occurs at positions 8 and 12. N6-acetyllysine; alternate is present on Lys17. Lys17 carries the post-translational modification N6-succinyllysine; alternate. Tyr25 is subject to Phosphotyrosine. Ser36 carries the post-translational modification Phosphoserine. An N6-succinyllysine modification is found at Lys41. Ser50 carries the post-translational modification Phosphoserine. His59 lines the O2 pocket. His88 serves as a coordination point for heme b. Ser103 carries the phosphoserine modification. A Phosphothreonine modification is found at Thr109. The residue at position 125 (Ser125) is a Phosphoserine. A phosphothreonine mark is found at Thr135 and Thr138. The residue at position 139 (Ser139) is a Phosphoserine.

The protein belongs to the globin family. As to quaternary structure, heterotetramer of two alpha chains and two beta chains. Red blood cells.

Functionally, involved in oxygen transport from the lung to the various peripheral tissues. This Bison bonasus (European bison) protein is Hemoglobin subunit alpha-I/II.